We begin with the raw amino-acid sequence, 319 residues long: Ribosomal RNA large subunit methyltransferase F (319 aa).

The segment at methionine 1 to asparagine 25 is disordered. Polar residues predominate over residues alanine 7–glycine 16.

It belongs to the methyltransferase superfamily. METTL16/RlmF family.

The protein localises to the cytoplasm. The catalysed reaction is adenosine(1618) in 23S rRNA + S-adenosyl-L-methionine = N(6)-methyladenosine(1618) in 23S rRNA + S-adenosyl-L-homocysteine + H(+). In terms of biological role, specifically methylates the adenine in position 1618 of 23S rRNA. This Shewanella amazonensis (strain ATCC BAA-1098 / SB2B) protein is Ribosomal RNA large subunit methyltransferase F.